Reading from the N-terminus, the 180-residue chain is MEMTFHATTIFAIHHNGKCAMAGDGQVTFGNAVVMKHTARKVRKIYHGKVLAGFAGSVADAFTLFEKFEAKLEEFNGNLQRSAVEVAKEWRSDKVLRRLEAMLIVMNEEHLLLVSGTGEVIEPDDGILAIGSGGNYALAAGRALKKKAPQLSAREIAQAALETAGDICVYTNDQLIVEEL.

Threonine 8 is an active-site residue. Residues glycine 165, cysteine 168, and threonine 171 each contribute to the Na(+) site.

The protein belongs to the peptidase T1B family. HslV subfamily. In terms of assembly, a double ring-shaped homohexamer of HslV is capped on each side by a ring-shaped HslU homohexamer. The assembly of the HslU/HslV complex is dependent on binding of ATP.

The protein resides in the cytoplasm. The catalysed reaction is ATP-dependent cleavage of peptide bonds with broad specificity.. Its activity is regulated as follows. Allosterically activated by HslU binding. Its function is as follows. Protease subunit of a proteasome-like degradation complex believed to be a general protein degrading machinery. The sequence is that of ATP-dependent protease subunit HslV from Halalkalibacterium halodurans (strain ATCC BAA-125 / DSM 18197 / FERM 7344 / JCM 9153 / C-125) (Bacillus halodurans).